We begin with the raw amino-acid sequence, 344 residues long: RNA 3'-terminal phosphate cyclase (344 aa).

ATP-binding positions include glutamine 103 and 283 to 287; that span reads HLADQ. The active-site Tele-AMP-histidine intermediate is the histidine 308.

Belongs to the RNA 3'-terminal cyclase family. Type 1 subfamily.

It localises to the cytoplasm. The catalysed reaction is a 3'-end 3'-phospho-ribonucleotide-RNA + ATP = a 3'-end 2',3'-cyclophospho-ribonucleotide-RNA + AMP + diphosphate. Its function is as follows. Catalyzes the conversion of 3'-phosphate to a 2',3'-cyclic phosphodiester at the end of RNA. The mechanism of action of the enzyme occurs in 3 steps: (A) adenylation of the enzyme by ATP; (B) transfer of adenylate to an RNA-N3'P to produce RNA-N3'PP5'A; (C) and attack of the adjacent 2'-hydroxyl on the 3'-phosphorus in the diester linkage to produce the cyclic end product. The biological role of this enzyme is unknown but it is likely to function in some aspects of cellular RNA processing. This Salmonella paratyphi C (strain RKS4594) protein is RNA 3'-terminal phosphate cyclase.